A 189-amino-acid chain; its full sequence is Receptor activity-modifying protein 2 (189 aa).

The first 44 residues, 1 to 44, serve as a signal peptide directing secretion; the sequence is MAPLRVERAPGGSRLGVTRAQRPTALCLPPLLLLLLLLLGAVSA. Residues 45 to 157 are Extracellular-facing; it reads SPESLNQSLP…VQPTFSDPPE (113 aa). The span at 49–61 shows a compositional bias: polar residues; that stretch reads LNQSLPESQNQSH. The segment at 49 to 69 is disordered; the sequence is LNQSLPESQNQSHPTEDSLVS. Asparagine 50, asparagine 58, asparagine 99, and asparagine 144 each carry an N-linked (GlcNAc...) asparagine glycan. 2 cysteine pairs are disulfide-bonded: cysteine 83-cysteine 113 and cysteine 98-cysteine 145. A helical transmembrane segment spans residues 158-179; it reads DVLLAMIIAPICLIPFLVTLVV. At 180–189 the chain is on the cytoplasmic side; that stretch reads WRSKDSDAQA.

The protein belongs to the RAMP family. In terms of assembly, heterodimer of CALCRL and RAMP2; the interaction forms the receptor complex for adrenomedullin/ADM. Heterodimer of CALCR and RAMP2; interaction forms the AMYR2 receptor complex for calcitonin/CALC and amylin/IAPP. In terms of tissue distribution, ubiquitous. Expressed predominantly in embryonic brain, lung and gut and in adult heart, lung, skeletal muscle and brain.

The protein localises to the cell membrane. Its function is as follows. Accessory protein that interacts with and modulates the function of G-protein coupled receptors including calcitonin gene-related peptide type 1 receptor (CALCRL) and calcitonin receptor (CALCR). Required for the transport of CALCRL to the plasma membrane. Together with CALCRL, form a receptor complex for adrenomedullin/ADM. Together with CALCR, act as a receptor complex for calcitonin/CT/CALC. Together with CALCR, also act as a receptor complex for amylin/IAPP. This Mus musculus (Mouse) protein is Receptor activity-modifying protein 2.